Reading from the N-terminus, the 377-residue chain is Membrane protein MLC1 (377 aa).

Residues 1–23 are compositionally biased toward basic and acidic residues; it reads MTQEPFREELAYDRMPTLERGRQ. The segment at 1-36 is disordered; the sequence is MTQEPFREELAYDRMPTLERGRQDPASYAPDAKPSD. 4 helical membrane passes run 52-72, 82-100, 111-131, and 144-164; these read WVFS…SLYL, YLRC…SFTV, FQIL…WFGC, and FNLI…IIAA. 2 positions are modified to phosphoserine: serine 177 and serine 179. A run of 4 helical transmembrane segments spans residues 199–219, 230–250, 257–277, and 304–324; these read SVVE…ALNV, VTFF…HVAA, LVEV…TASG, and LLLL…GTAI.

Interacts with ATP1B1. Part of a complex containing ATP1B1, TRPV4, AQP4 and HEPACAM. In terms of tissue distribution, expressed in the brain, with highest levels found in the amygdala, nucleus caudatus, thalamus and hippocampus.

Its subcellular location is the membrane. The protein localises to the cell membrane. It localises to the cytoplasm. It is found in the perinuclear region. The protein resides in the endoplasmic reticulum. Functionally, transmembrane protein mainly expressed in brain astrocytes that may play a role in transport across the blood-brain and brain-cerebrospinal fluid barriers. Regulates the response of astrocytes to hypo-osmosis by promoting calcium influx. May function as regulatory protein of membrane protein complexes such as ion channels. This chain is Membrane protein MLC1, found in Homo sapiens (Human).